The chain runs to 891 residues: Protein kinase kin1 (891 aa).

The tract at residues 65–116 is disordered; it reads GYISPSSQSPHHGPVRSPSSRKPLPASPSRTRDHSLRVPVSGHSYSADEKPR. In terms of domain architecture, Protein kinase spans 125-395; the sequence is YVLGKTIGAG…LEEVLNHPWM (271 aa). ATP contacts are provided by residues 131–139 and K154; that span reads IGAGSMGKV. The active-site Proton acceptor is the D266. T528 is modified (phosphothreonine). 3 disordered regions span residues 528–699, 728–747, and 805–841; these read TPVS…RNNR, TMGN…TDKL, and TPTK…LDDN. Low complexity-rich tracts occupy residues 529 to 538 and 583 to 603; these read PVSSVPSSPV and HSPS…IFRR. A phosphoserine mark is found at S535 and S536. Polar residues-rich tracts occupy residues 612–629, 649–659, 669–699, 728–742, and 820–829; these read KSST…TSQS, LVTQSAIGRST, ISSQ…RNNR, TMGN…SPSK, and YGSNSTTDSY. One can recognise a KA1 domain in the interval 842–891; it reads GESPASNLAFEIYIVKVPILSLRGVSFHRISGNSWQYKTLASRILNELKL.

Belongs to the protein kinase superfamily. Ser/Thr protein kinase family.

It localises to the cytoplasm. The enzyme catalyses L-seryl-[protein] + ATP = O-phospho-L-seryl-[protein] + ADP + H(+). The catalysed reaction is L-threonyl-[protein] + ATP = O-phospho-L-threonyl-[protein] + ADP + H(+). In terms of biological role, has a role in establishing the characteristic rod cell shape. Important for cell polarity and is involved in directing growth to the cell ends. In Schizosaccharomyces pombe (strain 972 / ATCC 24843) (Fission yeast), this protein is Protein kinase kin1 (kin1).